A 704-amino-acid chain; its full sequence is Elongation factor G (704 aa).

In terms of domain architecture, tr-type G spans 8 to 290 (EKYRNIGICA…GVVRYLPAPN (283 aa)). GTP-binding positions include 17-24 (AHVDAGKT), 88-92 (DTPGH), and 142-145 (NKMD).

The protein belongs to the TRAFAC class translation factor GTPase superfamily. Classic translation factor GTPase family. EF-G/EF-2 subfamily.

The protein localises to the cytoplasm. Its function is as follows. Catalyzes the GTP-dependent ribosomal translocation step during translation elongation. During this step, the ribosome changes from the pre-translocational (PRE) to the post-translocational (POST) state as the newly formed A-site-bound peptidyl-tRNA and P-site-bound deacylated tRNA move to the P and E sites, respectively. Catalyzes the coordinated movement of the two tRNA molecules, the mRNA and conformational changes in the ribosome. The sequence is that of Elongation factor G from Francisella tularensis subsp. tularensis (strain FSC 198).